We begin with the raw amino-acid sequence, 1509 residues long: DNA polymerase alpha catalytic subunit (1509 aa).

Positions 1–162 are disordered; sequence MNRPKREKKS…KKTKEKKNEI (162 aa). 2 stretches are compositionally biased toward basic and acidic residues: residues 21–35 and 42–79; these read EQIKRARDGEKRTDQ and ERKRLEQLKEQETEFDKEERKRKNRDFIEGDSGYRETS. A coiled-coil region spans residues 27–67; it reads RDGEKRTDQLQEEDDERKRLEQLKEQETEFDKEERKRKNRD. Over residues 80-123 the composition is skewed to acidic residues; sequence DNEDEDEDEDDDGDNSDDDYSLDEDDEDGGGDGENNDSDQEEAI. Basic residues predominate over residues 127-137; that stretch reads RKKKRQVKKKS. Residues 138-147 are compositionally biased toward basic and acidic residues; that stretch reads KKDENGEPKV. Residues 148–157 are compositionally biased toward basic residues; sequence KTPRVKKTKE. Coiled-coil stretches lie at residues 234–263 and 958–989; these read APDSELDLEKLKEKQLELEKKLEKEALLNK and LHGLVSKRREIKKRMEQEKNKIIKAQYDIQQQ. Residues Cys1328, Cys1331, Cys1355, Cys1358, Cys1389, Cys1392, Cys1406, and Cys1411 each coordinate Zn(2+). A CysA-type zinc finger spans residues 1328-1358; sequence CPYCGQNNEFTGIVKIDSEGKSESGFDCNQC. Residues 1389–1411 carry the CysB motif motif; that stretch reads CTECEKVSKNYKETSYRCARPQC.

Belongs to the DNA polymerase type-B family.

The protein localises to the nucleus. The catalysed reaction is DNA(n) + a 2'-deoxyribonucleoside 5'-triphosphate = DNA(n+1) + diphosphate. Polymerase alpha in a complex with DNA primase is a replicative polymerase. The protein is DNA polymerase alpha catalytic subunit (pola1) of Dictyostelium discoideum (Social amoeba).